Here is a 176-residue protein sequence, read N- to C-terminus: RNA pyrophosphohydrolase (176 aa).

Residues 6–149 enclose the Nudix hydrolase domain; sequence GYRPNVGIVI…KRDVYRRVMK (144 aa). The short motif at 38–59 is the Nudix box element; that stretch reads GGINPGESAEQAMYRELFEEVG.

Belongs to the Nudix hydrolase family. RppH subfamily. The cofactor is a divalent metal cation.

Its function is as follows. Accelerates the degradation of transcripts by removing pyrophosphate from the 5'-end of triphosphorylated RNA, leading to a more labile monophosphorylated state that can stimulate subsequent ribonuclease cleavage. This Shigella dysenteriae serotype 1 (strain Sd197) protein is RNA pyrophosphohydrolase.